We begin with the raw amino-acid sequence, 662 residues long: Acetyl-coenzyme A synthetase (662 aa).

CoA is bound by residues 197 to 200 (RKGK) and Thr317. Residues 393–395 (GEP), 417–422 (DTWWQT), Asp510, and Arg525 each bind ATP. Ser533 is a binding site for CoA. Arg536 contacts ATP. Residues His549 and Val552 each contribute to the Mg(2+) site. Position 623 is an N6-acetyllysine (Lys623).

It belongs to the ATP-dependent AMP-binding enzyme family. The cofactor is Mg(2+). Post-translationally, acetylated. Deacetylation by the SIR2-homolog deacetylase activates the enzyme.

The enzyme catalyses acetate + ATP + CoA = acetyl-CoA + AMP + diphosphate. Catalyzes the conversion of acetate into acetyl-CoA (AcCoA), an essential intermediate at the junction of anabolic and catabolic pathways. AcsA undergoes a two-step reaction. In the first half reaction, AcsA combines acetate with ATP to form acetyl-adenylate (AcAMP) intermediate. In the second half reaction, it can then transfer the acetyl group from AcAMP to the sulfhydryl group of CoA, forming the product AcCoA. This chain is Acetyl-coenzyme A synthetase, found in Helicobacter pylori (strain HPAG1).